Reading from the N-terminus, the 183-residue chain is Anterior gradient protein 1 (183 aa).

The N-terminal stretch at 1 to 18 (MQAGLSLVCLVLLCSALG) is a signal peptide.

Belongs to the AGR family. From stage 18 (neurula) onward, expressed in the cement gland until it degenerates. More weakly expressed in the adjacent hatching gland.

It localises to the secreted. Functionally, does not appear to be required for cement gland formation. This is Anterior gradient protein 1 (ag1) from Xenopus laevis (African clawed frog).